The chain runs to 619 residues: MEVEATEARSPGPCYKRSGRRYKCLFCTKTFPNAPRAARHAATHTPTDCTEEVREAQPKVDTEPKAEEASGDKVSASVAKPRPYACPLCPKAYKTAPELRSHGRSHTGEKPFPCPECGRRFMQPVCLRVHLASHAGELPFRCTHCPKAYGTLSKLKIHQRGHTGERPYACPDCGKSFADPSVFRKHRRTHAGLRPYSCERCGKAYAELKDLRNHERSHTGERPFLCSECGKSFSRSSSLTCHQRIHAAQKPYRCPACGKGFTQLSSYQSHERTHSGEKPFLCPRCGRMFSDPSSFRRHQRAHEGVKPYRCEKCGKDFRQPADLAMHRRVHTGDRPFKCLQCDKTFVASWDLKRHALVHSGQRPFRCEECGRAFAERASLTKHSRMHSGERPFHCNACGKSFVVLSSLRKHERTHRSNETTGAAPQQELVLGLALPVGVVGEGSAAPVAGAGVGDAPAGLLGLPPESGGVVATQWQVVGMTVEHVECQDAGVGEAPSTLGDAGEVGGEETDEKPPQFVCRECKETFSTLTLLRRHERSHPELRPFPCTQCGKSFSDRAGLRKHSRTHSSVRPYSCSQCPKAFLSASDLRKHERTHPVPIGTPIPLEPLVALLGMPEEGSA.

An N-acetylmethionine modification is found at methionine 1. Residue serine 10 is modified to Phosphoserine. The C2H2-type 1 zinc finger occupies 22–44; sequence YKCLFCTKTFPNAPRAARHAATH. The interval 36–74 is disordered; the sequence is RAARHAATHTPTDCTEEVREAQPKVDTEPKAEEASGDKV. Positions 51 to 71 are enriched in basic and acidic residues; the sequence is EEVREAQPKVDTEPKAEEASG. Residues lysine 59, lysine 65, and lysine 80 each participate in a glycyl lysine isopeptide (Lys-Gly) (interchain with G-Cter in SUMO2) cross-link. 11 consecutive C2H2-type zinc fingers follow at residues 84–106, 112–134, 140–162, 168–190, 196–218, 224–246, 252–274, 280–302, 308–330, 336–358, and 364–386; these read YACPLCPKAYKTAPELRSHGRSH, FPCPECGRRFMQPVCLRVHLASH, FRCTHCPKAYGTLSKLKIHQRGH, YACPDCGKSFADPSVFRKHRRTH, YSCERCGKAYAELKDLRNHERSH, FLCSECGKSFSRSSSLTCHQRIH, YRCPACGKGFTQLSSYQSHERTH, FLCPRCGRMFSDPSSFRRHQRAH, YRCEKCGKDFRQPADLAMHRRVH, FKCLQCDKTFVASWDLKRHALVH, and FRCEECGRAFAERASLTKHSRMH. Lysine 154 participates in a covalent cross-link: Glycyl lysine isopeptide (Lys-Gly) (interchain with G-Cter in SUMO2). Serine 387 carries the post-translational modification Phosphoserine. The segment at 392-414 adopts a C2H2-type 13 zinc-finger fold; that stretch reads FHCNACGKSFVVLSSLRKHERTH. Residues 491-513 are disordered; that stretch reads VGEAPSTLGDAGEVGGEETDEKP. Lysine 512 participates in a covalent cross-link: Glycyl lysine isopeptide (Lys-Gly) (interchain with G-Cter in SUMO2). 3 C2H2-type zinc fingers span residues 516–538, 544–566, and 572–594; these read FVCRECKETFSTLTLLRRHERSH, FPCTQCGKSFSDRAGLRKHSRTH, and YSCSQCPKAFLSASDLRKHERTH.

It belongs to the krueppel C2H2-type zinc-finger protein family.

It is found in the nucleus. In terms of biological role, may be involved in transcriptional regulation. May play a role in DNA repair process. In Mus musculus (Mouse), this protein is Zinc finger protein 668 (Znf668).